We begin with the raw amino-acid sequence, 208 residues long: Protein GrpE (208 aa).

The span at 1–12 (MTNKDESVEKNT) shows a compositional bias: basic and acidic residues. The tract at residues 1–49 (MTNKDESVEKNTESTVEVTNVKQNIDDSVEQTEESKGHLQDEAIEETSD) is disordered. A compositionally biased stretch (polar residues) spans 13 to 23 (ESTVEVTNVKQ).

Belongs to the GrpE family. In terms of assembly, homodimer.

It is found in the cytoplasm. Its function is as follows. Participates actively in the response to hyperosmotic and heat shock by preventing the aggregation of stress-denatured proteins, in association with DnaK and GrpE. It is the nucleotide exchange factor for DnaK and may function as a thermosensor. Unfolded proteins bind initially to DnaJ; upon interaction with the DnaJ-bound protein, DnaK hydrolyzes its bound ATP, resulting in the formation of a stable complex. GrpE releases ADP from DnaK; ATP binding to DnaK triggers the release of the substrate protein, thus completing the reaction cycle. Several rounds of ATP-dependent interactions between DnaJ, DnaK and GrpE are required for fully efficient folding. The protein is Protein GrpE of Staphylococcus aureus (strain bovine RF122 / ET3-1).